Reading from the N-terminus, the 387-residue chain is Zinc transporter 7 (387 aa).

Residues 1-37 (MLPLSIKDDEYKPAKFNLVVKLSGWFRSILADKTSRN) lie on the Cytoplasmic side of the membrane. Residues 38-58 (LFFFLCLNLSFAFVELLYGIW) traverse the membrane as a helical segment. The Lumenal segment spans residues 59–67 (SNSLGLISD). The chain crosses the membrane as a helical span at residues 68–88 (SFHMFFDCTALLAGLAASVIS). The Cytoplasmic portion of the chain corresponds to 89-102 (RWRSNDSFSYGYVR). The helical transmembrane segment at 103–123 (AEVLAGFVNGLFLIFTAFFIF) threads the bilayer. The Lumenal segment spans residues 124 to 140 (SEGVERALEPPDVHHDR). Residues 141–161 (LLPVSIAGLLVNLVGIFVFQH) form a helical membrane-spanning segment. The tract at residues 161–232 (HGGHGHSHGG…HDDQHCHDDH (72 aa)) is his-rich loop. Residues 162–247 (GGHGHSHGGD…KGSSKQILQG (86 aa)) are Cytoplasmic-facing. The disordered stretch occupies residues 167-237 (SHGGDDHGHS…CHDDHTLTPG (71 aa)). The segment covering 187–201 (GHSHGGHGHSHGGHG) has biased composition (basic residues). Composition is skewed to basic and acidic residues over residues 202–214 (HSHE…DHGH) and 221–233 (HSHD…DDHT). A helical transmembrane segment spans residues 248–268 (VFLHIVADTLGSVGVIISAIL). At 269–273 (MQKYD) the chain is on the lumenal side. A helical membrane pass occupies residues 274–294 (LMIADPICSMLIALLIGVSVV). At 295–387 (PLLRESIGIL…LYVQIEVAAM (93 aa)) the chain is on the cytoplasmic side.

Belongs to the cation diffusion facilitator (CDF) transporter (TC 2.A.4) family. SLC30A subfamily. Homooligomer.

Its subcellular location is the golgi apparatus membrane. It localises to the cytoplasmic vesicle. The protein resides in the golgi apparatus. The protein localises to the trans-Golgi network. It is found in the sarcoplasmic reticulum. Its subcellular location is the mitochondrion. It catalyses the reaction Zn(2+)(in) = Zn(2+)(out). Functionally, zinc ion transporter mediating zinc entry from the cytosol into the lumen of organelles along the secretory pathway. By contributing to zinc ion homeostasis within the early secretory pathway, regulates the activation and folding of enzymes like alkaline phosphatases. This chain is Zinc transporter 7 (slc30a7), found in Danio rerio (Zebrafish).